Reading from the N-terminus, the 293-residue chain is Zinc metalloproteinase nas-2 (293 aa).

The first 17 residues, 1-17 (MIFPLLLTLILPNFVAP), serve as a signal peptide directing secretion. Positions 18-67 (KVLEPEKDDEIAVSTQREKTFFDMKLILTKLPTFEPSKYGHINIPLRKKR) are excised as a propeptide. The Peptidase M12A domain occupies 67 to 260 (RGIALHPLQW…ININTFYKCK (194 aa)). N111 is a glycosylation site (N-linked (GlcNAc...) asparagine). Cystine bridges form between C114–C259 and C139–C169. H180 contributes to the Zn(2+) binding site. Residue E181 is part of the active site. The Zn(2+) site is built by H184 and H190. A glycan (N-linked (GlcNAc...) asparagine) is linked at N287.

It depends on Zn(2+) as a cofactor.

It localises to the secreted. Its function is as follows. Metalloprotease. This Caenorhabditis elegans protein is Zinc metalloproteinase nas-2 (nas-2).